The following is a 1065-amino-acid chain: Tubulin glycylase 3C (1065 aa).

Disordered stretches follow at residues 1–146 (MSSL…REDK), 158–182 (IREQ…TKSK), 301–326 (STQK…DIAK), 341–360 (EKKR…KEQL), 381–482 (FFVD…GNGS), and 708–755 (NKQK…EKQM). The segment covering 23–53 (QEGNQEDLNNQNDHNLNNNELDSLSSPPSDN) has biased composition (low complexity). Residues 54 to 63 (YNEEEFEQED) show a composition bias toward acidic residues. Polar residues predominate over residues 73–92 (QNASQNNISQTQRISQTQLP). Residues 122–146 (LMEKKKKEQEEKEKKELKLKKREDK) are compositionally biased toward basic and acidic residues. Polar residues predominate over residues 166–179 (LESQTEQSDHSNVT). The segment covering 313–326 (EGDKEKDDKKDIAK) has biased composition (basic and acidic residues). The span at 385–403 (VPEKKPKKEKKKNESKEDN) shows a compositional bias: basic and acidic residues. A compositionally biased stretch (polar residues) spans 404-423 (IQITSPKLNSTKSLSSQITR). Residues 424–450 (KTNDAKKVEKLPKIKDSNKENHSKERN) are compositionally biased toward basic and acidic residues. Residues 451-479 (EDNEEGDDGEYECDEGDEGASDGEDEDDG) are compositionally biased toward acidic residues. Residues 633-1009 (YFEKDPDIEK…DYGMEKSKKA (377 aa)) form the TTL domain. Residues 709 to 721 (KQKPKKKKKKSKK) show a composition bias toward basic residues. Basic and acidic residues predominate over residues 722–733 (DKQQGDTEKKEE). Positions 734 to 754 (EEGEAEDEEEDEEDEEEEEKQ) are enriched in acidic residues. Residues 821 to 824 (QKYI), K834, and D836 contribute to the ATP site.

It is found in the cell projection. The protein localises to the cilium. Its subcellular location is the cytoplasm. It localises to the cytoskeleton. The protein resides in the cilium axoneme. Its function is as follows. Probable glycylase which modifies tubulin, generating side chains of glycine on the gamma-carboxyl groups of specific glutamate residues within the C-terminal tail of tubulin. The chain is Tubulin glycylase 3C (TTLL3C) from Tetrahymena thermophila (strain SB210).